The following is a 353-amino-acid chain: Rhodopsin (353 aa).

Topologically, residues 1–36 (MNGTEGPFFYVPMVNTTGIVRSPYEYPQYYLVNPAA) are extracellular. 2 N-linked (GlcNAc...) asparagine glycosylation sites follow: asparagine 2 and asparagine 15. The chain crosses the membrane as a helical span at residues 37–61 (YAALGAYMFLLILVGFPINFLTLYV). Residues 62–73 (TIEHKKLRTPLN) are Cytoplasmic-facing. The chain crosses the membrane as a helical span at residues 74–96 (YILLNLAVADLFMVLGGFTTTMY). Residues 97–110 (TSMHGYFVLGRLGC) lie on the Extracellular side of the membrane. A disulfide bridge links cysteine 110 with cysteine 187. The helical transmembrane segment at 111–133 (NIEGFFATLGGEIALWSLVVLAI) threads the bilayer. Positions 134 to 136 (ERW) match the 'Ionic lock' involved in activated form stabilization motif. The Cytoplasmic segment spans residues 134–152 (ERWVVVCKPISNFRFGENH). Residues 153 to 173 (AIMGLAFTWTMAMACAAPPLV) form a helical membrane-spanning segment. At 174–202 (GWSRYIPEGMQCSCGIDYYTRAEGFNNES) the chain is on the extracellular side. The N-linked (GlcNAc...) asparagine glycan is linked to asparagine 200. Residues 203–224 (FVIYMFICHFTIPLTVVFFCYG) form a helical membrane-spanning segment. At 225 to 252 (RLLCAVKEAAAAQQESETTQRAEKEVTR) the chain is on the cytoplasmic side. The chain crosses the membrane as a helical span at residues 253–274 (MVIMMVIAFLVCWLPYASVAWY). The Extracellular portion of the chain corresponds to 275 to 286 (IFTHQGSEFGPV). The chain crosses the membrane as a helical span at residues 287–308 (FMTIPAFFAKSSSIYNPMIYIC). Residue lysine 296 is modified to N6-(retinylidene)lysine. The Cytoplasmic segment spans residues 309–353 (LNKQFRHCMITTLCCGKNPFEEEEGASTASKTEASSVSSSSVSPA). Residues cysteine 322 and cysteine 323 are each lipidated (S-palmitoyl cysteine). A disordered region spans residues 331-353 (EEGASTASKTEASSVSSSSVSPA). The segment covering 334–353 (ASTASKTEASSVSSSSVSPA) has biased composition (low complexity).

The protein belongs to the G-protein coupled receptor 1 family. Opsin subfamily. Phosphorylated on some or all of the serine and threonine residues present in the C-terminal region. Post-translationally, contains one covalently linked retinal chromophore.

It localises to the membrane. Its subcellular location is the cell projection. The protein resides in the cilium. The protein localises to the photoreceptor outer segment. In terms of biological role, photoreceptor required for image-forming vision at low light intensity. While most salt water fish species use retinal as chromophore, most freshwater fish use 3-dehydroretinal, or a mixture of retinal and 3-dehydroretinal. Light-induced isomerization of 11-cis to all-trans retinal triggers a conformational change that activates signaling via G-proteins. Subsequent receptor phosphorylation mediates displacement of the bound G-protein alpha subunit by arrestin and terminates signaling. In Diplodus annularis (Annular seabream), this protein is Rhodopsin (rho).